A 432-amino-acid chain; its full sequence is Phosphomethylpyrimidine synthase (432 aa).

Substrate is bound by residues N66, M95, Y124, H163, 185 to 187, 226 to 229, and E265; these read SRG and DGMR. Residue H269 coordinates Zn(2+). Substrate is bound at residue Y292. H333 serves as a coordination point for Zn(2+). C409, C412, and C416 together coordinate [4Fe-4S] cluster.

It belongs to the ThiC family. [4Fe-4S] cluster is required as a cofactor.

It catalyses the reaction 5-amino-1-(5-phospho-beta-D-ribosyl)imidazole + S-adenosyl-L-methionine = 4-amino-2-methyl-5-(phosphooxymethyl)pyrimidine + CO + 5'-deoxyadenosine + formate + L-methionine + 3 H(+). It participates in cofactor biosynthesis; thiamine diphosphate biosynthesis. Its function is as follows. Catalyzes the synthesis of the hydroxymethylpyrimidine phosphate (HMP-P) moiety of thiamine from aminoimidazole ribotide (AIR) in a radical S-adenosyl-L-methionine (SAM)-dependent reaction. The sequence is that of Phosphomethylpyrimidine synthase from Desulforudis audaxviator (strain MP104C).